The primary structure comprises 255 residues: Geranylgeranylglyceryl phosphate synthase (255 aa).

Positions 26 and 55 each coordinate Mg(2+). Sn-glycerol 1-phosphate contacts are provided by residues 174–180 (YLEAGSG), 205–206 (GG), and 227–228 (GT).

It belongs to the GGGP/HepGP synthase family. Group II subfamily. Mg(2+) serves as cofactor.

It localises to the cytoplasm. The enzyme catalyses sn-glycerol 1-phosphate + (2E,6E,10E)-geranylgeranyl diphosphate = sn-3-O-(geranylgeranyl)glycerol 1-phosphate + diphosphate. It functions in the pathway membrane lipid metabolism; glycerophospholipid metabolism. Functionally, prenyltransferase that catalyzes the transfer of the geranylgeranyl moiety of geranylgeranyl diphosphate (GGPP) to the C3 hydroxyl of sn-glycerol-1-phosphate (G1P). This reaction is the first ether-bond-formation step in the biosynthesis of archaeal membrane lipids. The sequence is that of Geranylgeranylglyceryl phosphate synthase from Thermococcus sibiricus (strain DSM 12597 / MM 739).